The primary structure comprises 100 residues: Protein SAMBA (100 aa).

The tract at residues 1 to 40 (MNGASPAHSLVSTTAVAGGGGSSGAAAGLDDFHFPPDIPS) is disordered.

Interacts with CDC27B and CYCA2-3. Expressed in embryos, germinating seeds, hypocotyls and pollen grains.

Plays an important role in organ size control. Acts as negative regulator of the anaphase-promoting complex/cyclosome (APC/C). Regulates cell proliferation during early development by targeting CYCA2-3 for APC/C-mediated degradation. Required for mitosis I during pollen microspore development. This chain is Protein SAMBA, found in Arabidopsis thaliana (Mouse-ear cress).